Reading from the N-terminus, the 152-residue chain is MATIEVEQVTPVAAENIEVPPPKAVESEEVTTVSESLPAPVTESQAPVEVTTKDLVVEETEKPIEETEEAQVETPEVVEIKKDEEAPVETPVVVEDESKTEEVVEAKKEEEVEEKKTEEAPVVVEEEKKPEAEEEKPAVEASVTAPVEKADE.

A run of 7 repeats spans residues 57-62, 67-71, 78-82, 104-108, 112-116, 124-129, and 131-136. The tract at residues 57-136 is 7 X 5 AA approximate repeats of V-E-E-K-K; that stretch reads VEETEKPIEE…EKKPEAEEEK (80 aa). The interval 60-152 is disordered; the sequence is TEKPIEETEE…VTAPVEKADE (93 aa). Basic and acidic residues predominate over residues 96-138; sequence DESKTEEVVEAKKEEEVEEKKTEEAPVVVEEEKKPEAEEEKPA.

As to expression, predominantly expressed in petioles (at protein level). Mainly observed in shoots, flowers, siliques and roots, and, to a lower extent, in stems and leaves.

It is found in the cytoplasm. Its subcellular location is the cytosol. In terms of biological role, binds calcium Ca(2+) and may act as a signal mediator to buffer Ca(2+). This chain is Cytosolic calcium-binding protein 1, found in Arabidopsis thaliana (Mouse-ear cress).